Reading from the N-terminus, the 248-residue chain is Ribosomal RNA small subunit methyltransferase G (248 aa).

S-adenosyl-L-methionine contacts are provided by residues Gly-85, Phe-90, 137–138 (IE), and Arg-156.

Belongs to the methyltransferase superfamily. RNA methyltransferase RsmG family.

The protein localises to the cytoplasm. Specifically methylates the N7 position of a guanine in 16S rRNA. This is Ribosomal RNA small subunit methyltransferase G from Parasynechococcus marenigrum (strain WH8102).